A 494-amino-acid polypeptide reads, in one-letter code: Catalase A (494 aa).

Over residues 1 to 23 (MTDRPTITTTAGAPVPDNQNSLT) the composition is skewed to polar residues. Positions 1–25 (MTDRPTITTTAGAPVPDNQNSLTAG) are disordered. Catalysis depends on residues His55 and Asn127. Tyr337 serves as a coordination point for heme.

This sequence belongs to the catalase family. It depends on heme as a cofactor.

It localises to the periplasm. The catalysed reaction is 2 H2O2 = O2 + 2 H2O. Functionally, decomposes hydrogen peroxide into water and oxygen; serves to protect cells from the toxic effects of hydrogen peroxide. The polypeptide is Catalase A (katA) (Rhizobium meliloti (strain 1021) (Ensifer meliloti)).